Consider the following 816-residue polypeptide: tRNA(Met) cytidine acetyltransferase TmcA (816 aa).

Residues glutamine 265 and arginine 439 each contribute to the ATP site. One can recognise an N-acetyltransferase domain in the interval glutamate 469–serine 664. Acetyl-CoA is bound by residues isoleucine 589 to threonine 591, glutamate 629, and arginine 636.

Belongs to the TmcA family.

The protein resides in the cytoplasm. It carries out the reaction cytidine(34) in elongator tRNA(Met) + acetyl-CoA + ATP + H2O = N(4)-acetylcytidine(34) in elongator tRNA(Met) + ADP + phosphate + CoA + H(+). The catalysed reaction is a cytidine in RNA + acetyl-CoA + ATP + H2O = an N(4)-acetylcytidine in RNA + ADP + phosphate + CoA + H(+). It catalyses the reaction a cytidine in tRNA + acetyl-CoA + ATP + H2O = an N(4)-acetylcytidine in tRNA + ADP + phosphate + CoA + H(+). The enzyme catalyses a cytidine in mRNA + acetyl-CoA + ATP + H2O = an N(4)-acetylcytidine in mRNA + ADP + phosphate + CoA + H(+). Its function is as follows. Catalyzes the formation of N(4)-acetylcytidine (ac(4)C) at the wobble position of tRNA(Met), by using acetyl-CoA as an acetyl donor and ATP (or GTP). Catalyzes the formation of 233 N(4)-acetylcytidine (ac(4)C) sites in RNA, on the middle C of a CCG motif. Modifications are found in rRNA, ncRNA, mRNA and tRNA. More acetylation is observed at 85 than at 65 or 75 degrees Celsius. The protein is tRNA(Met) cytidine acetyltransferase TmcA of Pyrococcus furiosus (strain ATCC 43587 / DSM 3638 / JCM 8422 / Vc1).